A 283-amino-acid chain; its full sequence is uncharacterized protein (283 aa).

Solcar repeat units follow at residues Gln14–Leu95, Asn102–Val185, and Gly190–Gly274. 6 helical membrane-spanning segments follow: residues Thr20–Ile40, Gly70–Ser90, Ala105–Leu125, Phe157–Met177, Ala184–Ala204, and Gly249–Leu266.

This sequence belongs to the mitochondrial carrier (TC 2.A.29) family.

It localises to the mitochondrion inner membrane. This is an uncharacterized protein from Schizosaccharomyces pombe (strain 972 / ATCC 24843) (Fission yeast).